Reading from the N-terminus, the 390-residue chain is Putative cyclin-F2-1 (390 aa).

A disordered region spans residues 135 to 154 (YNGDDDAPAPDDSMASRPQL).

It belongs to the cyclin family. Cyclin F subfamily.

In Oryza sativa subsp. japonica (Rice), this protein is Putative cyclin-F2-1 (CycF2-1).